The following is a 1059-amino-acid chain: Isoleucine--tRNA ligase (1059 aa).

Residues 47-57 (PYTSGQMHLGT) carry the 'HIGH' region motif. A 'KMSKS' region motif is present at residues 606–610 (KMSKS). K609 contacts ATP.

It belongs to the class-I aminoacyl-tRNA synthetase family. IleS type 2 subfamily. As to quaternary structure, monomer. Zn(2+) is required as a cofactor.

The protein resides in the cytoplasm. The enzyme catalyses tRNA(Ile) + L-isoleucine + ATP = L-isoleucyl-tRNA(Ile) + AMP + diphosphate. Catalyzes the attachment of isoleucine to tRNA(Ile). As IleRS can inadvertently accommodate and process structurally similar amino acids such as valine, to avoid such errors it has two additional distinct tRNA(Ile)-dependent editing activities. One activity is designated as 'pretransfer' editing and involves the hydrolysis of activated Val-AMP. The other activity is designated 'posttransfer' editing and involves deacylation of mischarged Val-tRNA(Ile). This Haloquadratum walsbyi (strain DSM 16790 / HBSQ001) protein is Isoleucine--tRNA ligase.